Reading from the N-terminus, the 385-residue chain is Ethanolamine kinase 2 (385 aa).

It belongs to the choline/ethanolamine kinase family.

The catalysed reaction is ethanolamine + ATP = phosphoethanolamine + ADP + H(+). It functions in the pathway phospholipid metabolism; phosphatidylethanolamine biosynthesis; phosphatidylethanolamine from ethanolamine: step 1/3. Its function is as follows. Highly specific for ethanolamine phosphorylation. Does not have choline kinase activity. This is Ethanolamine kinase 2 (Etnk2) from Rattus norvegicus (Rat).